Reading from the N-terminus, the 444-residue chain is Serine--tRNA ligase (444 aa).

Residue 249–251 (TAE) participates in L-serine binding. ATP-binding positions include 280-282 (RRE) and V296. E303 is an L-serine binding site. 367 to 370 (EIVS) contacts ATP. An L-serine-binding site is contributed by T401.

The protein belongs to the class-II aminoacyl-tRNA synthetase family. Type-1 seryl-tRNA synthetase subfamily. As to quaternary structure, homodimer. The tRNA molecule binds across the dimer.

It is found in the cytoplasm. It catalyses the reaction tRNA(Ser) + L-serine + ATP = L-seryl-tRNA(Ser) + AMP + diphosphate + H(+). It carries out the reaction tRNA(Sec) + L-serine + ATP = L-seryl-tRNA(Sec) + AMP + diphosphate + H(+). It participates in aminoacyl-tRNA biosynthesis; selenocysteinyl-tRNA(Sec) biosynthesis; L-seryl-tRNA(Sec) from L-serine and tRNA(Sec): step 1/1. Catalyzes the attachment of serine to tRNA(Ser). Is also able to aminoacylate tRNA(Sec) with serine, to form the misacylated tRNA L-seryl-tRNA(Sec), which will be further converted into selenocysteinyl-tRNA(Sec). The chain is Serine--tRNA ligase from Picrophilus torridus (strain ATCC 700027 / DSM 9790 / JCM 10055 / NBRC 100828 / KAW 2/3).